The following is a 156-amino-acid chain: Deoxyuridine 5'-triphosphate nucleotidohydrolase (156 aa).

Belongs to the dCTP deaminase family. Archaeal dUTPase subfamily. As to quaternary structure, homotrimer.

It carries out the reaction dUTP + H2O = dUMP + diphosphate + H(+). Its pathway is pyrimidine metabolism; dUMP biosynthesis; dUMP from dCTP (dUTP route): step 2/2. Functionally, this enzyme is involved in nucleotide metabolism: it produces dUMP, the immediate precursor of thymidine nucleotides and it decreases the intracellular concentration of dUTP so that uracil cannot be incorporated into DNA. The polypeptide is Deoxyuridine 5'-triphosphate nucleotidohydrolase (Methanocaldococcus jannaschii (strain ATCC 43067 / DSM 2661 / JAL-1 / JCM 10045 / NBRC 100440) (Methanococcus jannaschii)).